An 83-amino-acid chain; its full sequence is uncharacterized protein (83 aa).

This is an uncharacterized protein from Methanocaldococcus jannaschii (strain ATCC 43067 / DSM 2661 / JAL-1 / JCM 10045 / NBRC 100440) (Methanococcus jannaschii).